The following is a 264-amino-acid chain: O-methyltransferase resE (264 aa).

Positions 97 and 142 each coordinate S-adenosyl-L-methionine.

It belongs to the methyltransferase superfamily.

It catalyses the reaction desmethylrestrictinol + S-adenosyl-L-methionine = restrictinol + S-adenosyl-L-homocysteine + H(+). Its pathway is antifungal biosynthesis. Functionally, O-methyltransferase; part of the gene cluster that mediates the biosynthesis of the tetrahydropyranyl antifungal agent restricticin that acts as an inhibitor of CYP51 and blocks the ergosterol biosynthesis. Within the pathway, resE uses S-adenosylmethionine to methylate position C4 of desmethylrestrictinol to produce restrictinol. The highly reducing polyketide synthase resH, the short chain dehydrogenase resG, the cyclase resF, the FAD-dependent monooxygenase resA and the enoylreductase resD are required to generate the first stable intermediate desmethylrestrictinol. ResH with resD biosynthesize the first polyketide chain intermediate that is reduced by resG, followed by epoxidation by resA before 6-endo cyclization via epoxide opening by resF leads to desmethylrestrictinol. The methyltransferase resE then catalyzes the C4 O-methylation of desmethylrestrictinol to produce restrictinol, and the nonribosomal peptide synthetase resC catalyzes the C3 esterification of restrictinol with glycine that leads to restricticin. The protein is O-methyltransferase resE of Aspergillus sclerotiorum.